The primary structure comprises 234 residues: Orotidine 5'-phosphate decarboxylase (234 aa).

Substrate contacts are provided by residues Asp17, Lys38, 65–74 (DLKLHDIPNT), Thr122, Arg184, Gln193, Gly213, and Arg214. The Proton donor role is filled by Lys67.

The protein belongs to the OMP decarboxylase family. Type 1 subfamily. In terms of assembly, homodimer.

It carries out the reaction orotidine 5'-phosphate + H(+) = UMP + CO2. The protein operates within pyrimidine metabolism; UMP biosynthesis via de novo pathway; UMP from orotate: step 2/2. Its function is as follows. Catalyzes the decarboxylation of orotidine 5'-monophosphate (OMP) to uridine 5'-monophosphate (UMP). The chain is Orotidine 5'-phosphate decarboxylase from Thermosynechococcus vestitus (strain NIES-2133 / IAM M-273 / BP-1).